The chain runs to 184 residues: TATA-box-binding protein (184 aa).

2 tandem repeats follow at residues 9–85 (IENI…IDKL) and 100–178 (VQNI…KKEL).

The protein belongs to the TBP family.

In terms of biological role, general factor that plays a role in the activation of archaeal genes transcribed by RNA polymerase. Binds specifically to the TATA box promoter element which lies close to the position of transcription initiation. In Thermoplasma acidophilum (strain ATCC 25905 / DSM 1728 / JCM 9062 / NBRC 15155 / AMRC-C165), this protein is TATA-box-binding protein (tbp).